Here is an 81-residue protein sequence, read N- to C-terminus: Alpha-toxin Ac1 (81 aa).

The signal sequence occupies residues Y1 to S17. The region spanning R19–T80 is the LCN-type CS-alpha/beta domain. 4 disulfide bridges follow: C29/C79, C33/C51, C37/C61, and C41/C63.

The protein belongs to the long (4 C-C) scorpion toxin superfamily. Sodium channel inhibitor family. Alpha subfamily. Expressed by the venom gland.

Its subcellular location is the secreted. Functionally, alpha toxins bind voltage-independently at site-3 of sodium channels (Nav) and inhibit the inactivation of the activated channels, thereby blocking neuronal transmission. This is Alpha-toxin Ac1 from Androctonus crassicauda (Arabian fat-tailed scorpion).